The sequence spans 653 residues: Aspartate--tRNA ligase, mitochondrial (653 aa).

The N-terminal 46 residues, 1–46, are a transit peptide targeting the mitochondrion; sequence MYLGFWLSRLCRGLSRPIGKTMRPIWGSLSRNLALSSQRIPEFSSF. Threonine 218 carries the post-translational modification Phosphothreonine. Serine 241 carries the phosphoserine modification. Residues 243–246 form an aspartate region; sequence QQFK. Arginine 265 contributes to the L-aspartate binding site. Residues 265 to 267 and glutamate 534 each bind ATP; that span reads RDE. Residue arginine 541 coordinates L-aspartate. 583 to 586 lines the ATP pocket; sequence GLDR.

Belongs to the class-II aminoacyl-tRNA synthetase family. Type 1 subfamily. Homodimer.

It is found in the mitochondrion matrix. The protein localises to the mitochondrion membrane. The enzyme catalyses tRNA(Asp) + L-aspartate + ATP = L-aspartyl-tRNA(Asp) + AMP + diphosphate. Catalyzes the attachment of aspartate to tRNA(Asp) in a two-step reaction: aspartate is first activated by ATP to form Asp-AMP and then transferred to the acceptor end of tRNA(Asp). The polypeptide is Aspartate--tRNA ligase, mitochondrial (Dars2) (Mus musculus (Mouse)).